The following is an 88-amino-acid chain: Elongation factor 1-beta (88 aa).

Belongs to the EF-1-beta/EF-1-delta family.

Its function is as follows. Promotes the exchange of GDP for GTP in EF-1-alpha/GDP, thus allowing the regeneration of EF-1-alpha/GTP that could then be used to form the ternary complex EF-1-alpha/GTP/AAtRNA. The chain is Elongation factor 1-beta (ef1b) from Thermoplasma volcanium (strain ATCC 51530 / DSM 4299 / JCM 9571 / NBRC 15438 / GSS1).